The primary structure comprises 104 residues: MNRLRKGDEVIVIAGKDKGKRGSVSQVMQNGKLIVDGINLAKKHVKPNPMTGEQGGIVSKEMPVDASNVALYNPETKKADRVGVRVEGDVKTRFFKSNGKSVDA.

Belongs to the universal ribosomal protein uL24 family. Part of the 50S ribosomal subunit.

In terms of biological role, one of two assembly initiator proteins, it binds directly to the 5'-end of the 23S rRNA, where it nucleates assembly of the 50S subunit. Its function is as follows. One of the proteins that surrounds the polypeptide exit tunnel on the outside of the subunit. The protein is Large ribosomal subunit protein uL24 of Hydrogenovibrio crunogenus (strain DSM 25203 / XCL-2) (Thiomicrospira crunogena).